The primary structure comprises 101 residues: Citrate lyase acyl carrier protein (101 aa).

Ser-14 bears the O-(phosphoribosyl dephospho-coenzyme A)serine mark.

It belongs to the CitD family. In terms of assembly, oligomer with a subunit composition of (alpha,beta,gamma)6.

The protein resides in the cytoplasm. In terms of biological role, covalent carrier of the coenzyme of citrate lyase. The protein is Citrate lyase acyl carrier protein of Latilactobacillus sakei subsp. sakei (strain 23K) (Lactobacillus sakei subsp. sakei).